Reading from the N-terminus, the 38-residue chain is Large ribosomal subunit protein bL36 (38 aa).

This sequence belongs to the bacterial ribosomal protein bL36 family.

The polypeptide is Large ribosomal subunit protein bL36 (Wigglesworthia glossinidia brevipalpis).